The following is a 172-amino-acid chain: Large ribosomal subunit protein uL10 (172 aa).

Belongs to the universal ribosomal protein uL10 family. As to quaternary structure, part of the ribosomal stalk of the 50S ribosomal subunit. The N-terminus interacts with L11 and the large rRNA to form the base of the stalk. The C-terminus forms an elongated spine to which L12 dimers bind in a sequential fashion forming a multimeric L10(L12)X complex.

Its function is as follows. Forms part of the ribosomal stalk, playing a central role in the interaction of the ribosome with GTP-bound translation factors. The sequence is that of Large ribosomal subunit protein uL10 from Rhizobium johnstonii (strain DSM 114642 / LMG 32736 / 3841) (Rhizobium leguminosarum bv. viciae).